Consider the following 84-residue polypeptide: Putative regulatory protein Hore_09800 (84 aa).

This sequence belongs to the RemA family.

The polypeptide is Putative regulatory protein Hore_09800 (Halothermothrix orenii (strain H 168 / OCM 544 / DSM 9562)).